Here is a 413-residue protein sequence, read N- to C-terminus: Zona pellucida-like domain-containing protein 1 (413 aa).

Positions 1–19 (MEQICLIILLISKALSVGA) are cleaved as a signal peptide. Q20 bears the Pyrrolidone carboxylic acid mark. At 20–370 (QFNGYNCDAN…PVFRMNTVTS (351 aa)) the chain is on the extracellular side. The region spanning 43 to 320 (YCGVQTITLK…PICGSRKKRD (278 aa)) is the ZP domain. 2 disulfides stabilise this stretch: C44–C155 and C79–C104. N-linked (GlcNAc...) asparagine glycosylation is found at N85, N121, N129, N164, N181, and N194. Intrachain disulfides connect C235-C296 and C255-C313. Residue N351 is glycosylated (N-linked (GlcNAc...) asparagine). The helical transmembrane segment at 371-391 (ALISGIIILGVMSLCFFILSL) threads the bilayer. Residues 392 to 413 (TLLKGKRAPPTILSGARNPAFN) lie on the Cytoplasmic side of the membrane.

In terms of processing, proteolytically cleaved before the transmembrane segment to yield the secreted form found in the extracellular matrix of the cupula. N-glycosylated. Detected in the acellular cupulae of the vestibular organ, and also in support cells adjacent to the cupula (at protein level).

It localises to the cytoplasmic vesicle membrane. It is found in the secreted. The protein resides in the extracellular space. The protein localises to the extracellular matrix. Its function is as follows. Glycoprotein which is a component of the gelatinous extracellular matrix in the cupulae of the vestibular organ. This chain is Zona pellucida-like domain-containing protein 1, found in Salmo salar (Atlantic salmon).